We begin with the raw amino-acid sequence, 197 residues long: TLE family member 5 (197 aa).

A CCN domain region spans residues 166–197 (LSALGSQAHLSKEDKNGHDGDTHQEDDGEKSD). The interval 174 to 197 (HLSKEDKNGHDGDTHQEDDGEKSD) is disordered. A compositionally biased stretch (basic and acidic residues) spans 175–197 (LSKEDKNGHDGDTHQEDDGEKSD). Position 196 is a phosphoserine (Ser196).

The protein belongs to the WD repeat Groucho/TLE family. As to quaternary structure, homooligomer and heterooligomer with other family members. Binds TCF7. Binds the NF-kappa-B subunit RELA. Interacts with PHF12. Interacts (via Q domain) with SIX3. Interacts with SIX6. Ubiquitinated by XIAP/BIRC4. Found predominantly in muscle, heart and Placenta. In fetal tissues, abundantly expressed in the heart, lung, kidney, brain and liver.

It localises to the nucleus. Functionally, transcriptional corepressor. Acts as a dominant repressor towards other family members. Inhibits NF-kappa-B-regulated gene expression. May be required for the initiation and maintenance of the differentiated state. Essential for the transcriptional repressor activity of SIX3 during retina and lens development. This is TLE family member 5 from Homo sapiens (Human).